Reading from the N-terminus, the 430-residue chain is MAVFPLSAKHRKYALRALAVSIILVSAAYIALTERTERVRPQRVEQNLPPLSWGGSGVQTAYWVQEAVQPGDSLADVLARSGMARDEIARITEKYGGEADLRHLRADQSVHVLVGGDGGAREVQFFTDEDGERNLVALEKKGGIWRRSASEADMKVLPTLRSVVVKTSARGSLARAEVPVEIRESLSGIFAGRFSLDGLKEGDAVRLIYDSLYFHGQQVAAGDILAAEVVKGGTRHQAFYYRSDKEGGGGGNYYDEDGRVLQEKGGFNIEPLVYTRISSPFGYRMHPILHTWRLHTGIDYAAPQGTPVRASADGVITFKGRKGGYGNAVMIRHANGVETLYAHLSAFSQAQGNVRGGEVIGFVGSTGRSTGPHLHYEARINGQPVNPVSVALPTPELTQADKAAFAAQKQKADALLARLRGIPVTVSQSD.

The Zn(2+) site is built by His-295, Asp-299, and His-375.

It belongs to the peptidase M23B family. In terms of assembly, monomer. The cofactor is Zn(2+). In terms of processing, likely to be synthesized as a proenzyme. The cleavage of the N-terminal domain is probably required for the activation of the enzyme.

Its subcellular location is the cell outer membrane. Has both endopeptidase and DD-carboxypeptidase activities. Degrades cell wall peptidoglycan (PG) to allow consummate expression of pili. The sequence is that of DD-carboxypeptidase/endopeptidase Mpg from Neisseria meningitidis serogroup B (strain ATCC 13091 / M2091).